Reading from the N-terminus, the 289-residue chain is ATP synthase gamma chain (289 aa).

It belongs to the ATPase gamma chain family. In terms of assembly, F-type ATPases have 2 components, CF(1) - the catalytic core - and CF(0) - the membrane proton channel. CF(1) has five subunits: alpha(3), beta(3), gamma(1), delta(1), epsilon(1). CF(0) has three main subunits: a, b and c.

The protein resides in the cell inner membrane. Functionally, produces ATP from ADP in the presence of a proton gradient across the membrane. The gamma chain is believed to be important in regulating ATPase activity and the flow of protons through the CF(0) complex. This Azorhizobium caulinodans (strain ATCC 43989 / DSM 5975 / JCM 20966 / LMG 6465 / NBRC 14845 / NCIMB 13405 / ORS 571) protein is ATP synthase gamma chain.